The primary structure comprises 104 residues: uncharacterized protein (104 aa).

Residues 1–23 form the signal peptide; it reads MDIHDYVELIALAFWVISVVSVG.

This is an uncharacterized protein from Lactobacillus helveticus (Lactobacillus suntoryeus).